A 361-amino-acid polypeptide reads, in one-letter code: Chorismate synthase (361 aa).

Positions 37 to 59 (TEADLQHDLDRRRPGTSRYTTQR) are disordered. The segment covering 40–49 (DLQHDLDRRR) has biased composition (basic and acidic residues). Positions 48 and 54 each coordinate NADP(+). Residues 125-127 (RSS), 238-239 (NA), Gly-278, 293-297 (KPTSS), and Arg-319 contribute to the FMN site.

The protein belongs to the chorismate synthase family. Homotetramer. FMNH2 is required as a cofactor.

It carries out the reaction 5-O-(1-carboxyvinyl)-3-phosphoshikimate = chorismate + phosphate. It functions in the pathway metabolic intermediate biosynthesis; chorismate biosynthesis; chorismate from D-erythrose 4-phosphate and phosphoenolpyruvate: step 7/7. Its function is as follows. Catalyzes the anti-1,4-elimination of the C-3 phosphate and the C-6 proR hydrogen from 5-enolpyruvylshikimate-3-phosphate (EPSP) to yield chorismate, which is the branch point compound that serves as the starting substrate for the three terminal pathways of aromatic amino acid biosynthesis. This reaction introduces a second double bond into the aromatic ring system. This chain is Chorismate synthase, found in Serratia proteamaculans (strain 568).